Consider the following 332-residue polypeptide: NADH-quinone oxidoreductase subunit H (332 aa).

8 helical membrane-spanning segments follow: residues 11–31, 77–97, 110–130, 156–176, 182–202, 240–260, 268–288, and 307–327; these read TYKILFLLVPVLVSVAMIVWL, VIFILAPIVTMTLALVSWAVI, VGVLYLFAVSSLGVYGIIMGG, IGVIIINVLLCVGSLNLNDII, LWFIIPLFPMFVIFFISALAE, NILLMCAMGSILFLGGWLSPI, IPGAIWMIFKILFLFVLFALV, and IFLPLSLTWVVLTASYLFYFN.

This sequence belongs to the complex I subunit 1 family. As to quaternary structure, NDH-1 is composed of 14 different subunits. Subunits NuoA, H, J, K, L, M, N constitute the membrane sector of the complex.

It localises to the cell inner membrane. It catalyses the reaction a quinone + NADH + 5 H(+)(in) = a quinol + NAD(+) + 4 H(+)(out). Its function is as follows. NDH-1 shuttles electrons from NADH, via FMN and iron-sulfur (Fe-S) centers, to quinones in the respiratory chain. The immediate electron acceptor for the enzyme in this species is believed to be ubiquinone. Couples the redox reaction to proton translocation (for every two electrons transferred, four hydrogen ions are translocated across the cytoplasmic membrane), and thus conserves the redox energy in a proton gradient. This subunit may bind ubiquinone. The polypeptide is NADH-quinone oxidoreductase subunit H (Pelagibacter ubique (strain HTCC1062)).